A 432-amino-acid chain; its full sequence is Glutamyl-tRNA reductase (432 aa).

Substrate-binding positions include T49–R52, S107, E112–Q114, and Q118. C50 (nucleophile) is an active-site residue. Residue G186–G191 participates in NADP(+) binding.

It belongs to the glutamyl-tRNA reductase family. As to quaternary structure, homodimer.

It carries out the reaction (S)-4-amino-5-oxopentanoate + tRNA(Glu) + NADP(+) = L-glutamyl-tRNA(Glu) + NADPH + H(+). Its pathway is porphyrin-containing compound metabolism; protoporphyrin-IX biosynthesis; 5-aminolevulinate from L-glutamyl-tRNA(Glu): step 1/2. Its function is as follows. Catalyzes the NADPH-dependent reduction of glutamyl-tRNA(Glu) to glutamate 1-semialdehyde (GSA). This chain is Glutamyl-tRNA reductase, found in Campylobacter jejuni (strain RM1221).